Consider the following 190-residue polypeptide: ATP synthase subunit b (190 aa).

A helical membrane pass occupies residues 4–24; that stretch reads ILAPVLSLVLIAGVASPALAA.

The protein belongs to the ATPase B chain family. As to quaternary structure, F-type ATPases have 2 components, F(1) - the catalytic core - and F(0) - the membrane proton channel. F(1) has five subunits: alpha(3), beta(3), gamma(1), delta(1), epsilon(1). F(0) has three main subunits: a(1), b(2) and c(10-14). The alpha and beta chains form an alternating ring which encloses part of the gamma chain. F(1) is attached to F(0) by a central stalk formed by the gamma and epsilon chains, while a peripheral stalk is formed by the delta and b chains.

The protein localises to the cell inner membrane. Functionally, f(1)F(0) ATP synthase produces ATP from ADP in the presence of a proton or sodium gradient. F-type ATPases consist of two structural domains, F(1) containing the extramembraneous catalytic core and F(0) containing the membrane proton channel, linked together by a central stalk and a peripheral stalk. During catalysis, ATP synthesis in the catalytic domain of F(1) is coupled via a rotary mechanism of the central stalk subunits to proton translocation. Its function is as follows. Component of the F(0) channel, it forms part of the peripheral stalk, linking F(1) to F(0). The chain is ATP synthase subunit b from Ruegeria pomeroyi (strain ATCC 700808 / DSM 15171 / DSS-3) (Silicibacter pomeroyi).